The chain runs to 252 residues: Protein BTG3 (252 aa).

The disordered stretch occupies residues 138–162; the sequence is VTSDYHSGSSSSDEDTSKEVEVKPS.

The protein belongs to the BTG family. In terms of tissue distribution, highly expressed in the brain.

Overexpression impairs serum-induced cell cycle progression from the G0/G1 to S phase. This Rattus norvegicus (Rat) protein is Protein BTG3.